The following is a 225-amino-acid chain: Protein LiaH (225 aa).

Coiled-coil stretches lie at residues 58 to 151 (KKYE…KEHM) and 161 to 182 (ESAYREFLRIENRIEEMEIRAN).

This sequence belongs to the PspA/Vipp/IM30 family.

This chain is Protein LiaH (liaH), found in Bacillus subtilis (strain 168).